The following is a 280-amino-acid chain: Probable endonuclease lcl3 (280 aa).

The chain crosses the membrane as a helical span at residues 50–67; sequence TLIPTLILTTAILSAARF. The TNase-like domain maps to 89–257; that stretch reads RSIYGKVTSV…KLKGNGMWKG (169 aa). Residue Arg-140 is part of the active site. Asp-145 is a binding site for Ca(2+). Residues Glu-148 and Arg-188 contribute to the active site.

The protein belongs to the LCL3 family.

It localises to the mitochondrion. The protein resides in the membrane. This Emericella nidulans (strain FGSC A4 / ATCC 38163 / CBS 112.46 / NRRL 194 / M139) (Aspergillus nidulans) protein is Probable endonuclease lcl3 (lcl3).